A 313-amino-acid chain; its full sequence is Pyrimidine-specific ribonucleoside hydrolase RihB (313 aa).

The active-site Proton acceptor is the Asp11. 3 residues coordinate Ca(2+): Asp11, Asp16, and Val124. 2 residues coordinate substrate: Gln227 and His239. Asp240 serves as a coordination point for Ca(2+).

It belongs to the IUNH family. RihB subfamily. In terms of assembly, homotetramer. Ca(2+) is required as a cofactor.

The catalysed reaction is a pyrimidine ribonucleoside + H2O = a pyrimidine nucleobase + D-ribose. Functionally, hydrolyzes cytidine or uridine to ribose and cytosine or uracil, respectively. Has a clear preference for cytidine over uridine. Strictly specific for ribonucleosides. The chain is Pyrimidine-specific ribonucleoside hydrolase RihB from Escherichia coli (strain SMS-3-5 / SECEC).